The following is a 353-amino-acid chain: Methylthioribose-1-phosphate isomerase (353 aa).

Residues 51 to 53 (RGA), arginine 94, and glutamine 199 each bind substrate. Residue aspartate 240 is the Proton donor of the active site. 250–251 (NK) contacts substrate.

It belongs to the eIF-2B alpha/beta/delta subunits family. MtnA subfamily. Homodimer.

The enzyme catalyses 5-(methylsulfanyl)-alpha-D-ribose 1-phosphate = 5-(methylsulfanyl)-D-ribulose 1-phosphate. The protein operates within amino-acid biosynthesis; L-methionine biosynthesis via salvage pathway; L-methionine from S-methyl-5-thio-alpha-D-ribose 1-phosphate: step 1/6. Functionally, catalyzes the interconversion of methylthioribose-1-phosphate (MTR-1-P) into methylthioribulose-1-phosphate (MTRu-1-P). The polypeptide is Methylthioribose-1-phosphate isomerase (Bacillus licheniformis (strain ATCC 14580 / DSM 13 / JCM 2505 / CCUG 7422 / NBRC 12200 / NCIMB 9375 / NCTC 10341 / NRRL NRS-1264 / Gibson 46)).